Here is a 136-residue protein sequence, read N- to C-terminus: Holo-[acyl-carrier-protein] synthase (136 aa).

Aspartate 8 and glutamate 57 together coordinate Mg(2+).

It belongs to the P-Pant transferase superfamily. AcpS family. Mg(2+) serves as cofactor.

The protein localises to the cytoplasm. The enzyme catalyses apo-[ACP] + CoA = holo-[ACP] + adenosine 3',5'-bisphosphate + H(+). Its function is as follows. Transfers the 4'-phosphopantetheine moiety from coenzyme A to a Ser of acyl-carrier-protein. The chain is Holo-[acyl-carrier-protein] synthase from Methylobacterium radiotolerans (strain ATCC 27329 / DSM 1819 / JCM 2831 / NBRC 15690 / NCIMB 10815 / 0-1).